Consider the following 250-residue polypeptide: Probable transcriptional regulatory protein RHA1_ro06891 (250 aa).

The protein belongs to the TACO1 family.

The protein resides in the cytoplasm. This Rhodococcus jostii (strain RHA1) protein is Probable transcriptional regulatory protein RHA1_ro06891.